Here is a 525-residue protein sequence, read N- to C-terminus: AP-4 complex accessory subunit Tepsin (525 aa).

The region spanning 8-141 (RDRLSFLHRL…FSDTVLPLAP (134 aa)) is the ENTH domain. The interval 139–229 (LAPSQPLGTP…SHSGASREPG (91 aa)) is disordered. Low complexity predominate over residues 193–225 (SGPSSQNSSQNSDLSRVSDSGSHSGSDSHSGAS). 2 positions are modified to phosphoserine: Ser333 and Ser356. The disordered stretch occupies residues 355–465 (LSPARGTSAE…PKRGPSSCAW (111 aa)). Residues 393 to 412 (PLSSTPVSSRSPAPSSGMPS) show a composition bias toward low complexity. Pro residues predominate over residues 413–429 (SPVPTPPPDASPIPAPG). Residues 434 to 448 (AEARLAESRRWRPER) show a composition bias toward basic and acidic residues. Residues 467–477 (RDSLFAGMELV) form an interaction with AP4B1 region. The interval 487 to 525 (AAAGESCPDAPRAPQTSSQRTAAKEPPGSEPSAFAFLNA) is disordered. An interaction with AP4E1 region spans residues 515–525 (SEPSAFAFLNA).

As to quaternary structure, interacts with AP4B1 and AP4E1; the interaction is direct and mediates the association of TEPSIN with the adapter-like complex 4 (AP-4), a heterotetramer composed of AP4B1, AP4E1, AP4M1 and AP4S1.

It localises to the golgi apparatus. Its subcellular location is the trans-Golgi network membrane. The protein resides in the cytoplasmic vesicle. It is found in the cytoplasm. The protein localises to the cytosol. Associates with the adapter-like complex 4 (AP-4) and may therefore play a role in vesicular trafficking of proteins at the trans-Golgi network. In Homo sapiens (Human), this protein is AP-4 complex accessory subunit Tepsin.